The following is a 667-amino-acid chain: Smc-like protein Sph2 (667 aa).

Coiled coils occupy residues 153–295 and 355–517; these read GSIQ…SLAT and GRLD…AITA.

Belongs to the Sph1/Sph2 family.

The protein resides in the cytoplasm. Functionally, may play a role in replication. The sequence is that of Smc-like protein Sph2 (sph2) from Halobacterium salinarum (strain ATCC 29341 / DSM 671 / R1).